A 112-amino-acid chain; its full sequence is U-scoloptoxin(16)-Er5a (112 aa).

Residues Met1–Ala26 form the signal peptide.

Belongs to the scoloptoxin-16 family. Post-translationally, contains 2 disulfide bonds. Expressed by the venom gland.

Its subcellular location is the secreted. The polypeptide is U-scoloptoxin(16)-Er5a (Ethmostigmus rubripes (Giant centipede)).